A 132-amino-acid chain; its full sequence is Ribonuclease P protein component (132 aa).

Belongs to the RnpA family. In terms of assembly, consists of a catalytic RNA component (M1 or rnpB) and a protein subunit.

It carries out the reaction Endonucleolytic cleavage of RNA, removing 5'-extranucleotides from tRNA precursor.. Its function is as follows. RNaseP catalyzes the removal of the 5'-leader sequence from pre-tRNA to produce the mature 5'-terminus. It can also cleave other RNA substrates such as 4.5S RNA. The protein component plays an auxiliary but essential role in vivo by binding to the 5'-leader sequence and broadening the substrate specificity of the ribozyme. In Micrococcus luteus (strain ATCC 4698 / DSM 20030 / JCM 1464 / CCM 169 / CCUG 5858 / IAM 1056 / NBRC 3333 / NCIMB 9278 / NCTC 2665 / VKM Ac-2230) (Micrococcus lysodeikticus), this protein is Ribonuclease P protein component.